The primary structure comprises 702 residues: K(+)-insensitive pyrophosphate-energized proton pump (702 aa).

A run of 4 helical transmembrane segments spans residues glycine 3 to isoleucine 23, alanine 63 to isoleucine 83, methionine 130 to isoleucine 150, and valine 162 to phenylalanine 182. Position 184 (lysine 184) interacts with substrate. Mg(2+) contacts are provided by aspartate 187, aspartate 191, asparagine 214, and aspartate 217. 6 consecutive transmembrane segments (helical) span residues alanine 234 to methionine 254, threonine 255 to glycine 275, glycine 294 to proline 314, glycine 329 to valine 349, glycine 379 to isoleucine 399, and leucine 407 to leucine 427. Residue aspartate 435 coordinates Mg(2+). A run of 4 helical transmembrane segments spans residues alanine 466–alanine 486, tyrosine 517–methionine 537, isoleucine 586–isoleucine 606, and alanine 612–isoleucine 632. The Ca(2+) site is built by aspartate 642, aspartate 668, and aspartate 672. Residue lysine 675 coordinates substrate.

This sequence belongs to the H(+)-translocating pyrophosphatase (TC 3.A.10) family. K(+)-insensitive subfamily. As to quaternary structure, homodimer. The cofactor is Mg(2+).

It is found in the cell inner membrane. The catalysed reaction is diphosphate + H2O + H(+)(in) = 2 phosphate + 2 H(+)(out). Functionally, proton pump that utilizes the energy of pyrophosphate hydrolysis as the driving force for proton movement across the membrane. Generates a proton motive force. In Rhodospirillum rubrum (strain ATCC 11170 / ATH 1.1.1 / DSM 467 / LMG 4362 / NCIMB 8255 / S1), this protein is K(+)-insensitive pyrophosphate-energized proton pump.